We begin with the raw amino-acid sequence, 305 residues long: Homoserine O-acetyltransferase (305 aa).

Residue Cys142 is the Acyl-thioester intermediate of the active site. 2 residues coordinate substrate: Lys163 and Ser192. The active-site Proton acceptor is His235. Glu237 is a catalytic residue. Arg249 contacts substrate.

Belongs to the MetA family.

The protein resides in the cytoplasm. The enzyme catalyses L-homoserine + acetyl-CoA = O-acetyl-L-homoserine + CoA. It functions in the pathway amino-acid biosynthesis; L-methionine biosynthesis via de novo pathway; O-acetyl-L-homoserine from L-homoserine: step 1/1. Its function is as follows. Transfers an acetyl group from acetyl-CoA to L-homoserine, forming acetyl-L-homoserine. In Dinoroseobacter shibae (strain DSM 16493 / NCIMB 14021 / DFL 12), this protein is Homoserine O-acetyltransferase.